A 313-amino-acid polypeptide reads, in one-letter code: Ribosomal RNA small subunit methyltransferase H (313 aa).

S-adenosyl-L-methionine is bound by residues 35-37, Asp55, Phe79, Asp101, and Gln108; that span reads GGH.

The protein belongs to the methyltransferase superfamily. RsmH family.

It localises to the cytoplasm. It catalyses the reaction cytidine(1402) in 16S rRNA + S-adenosyl-L-methionine = N(4)-methylcytidine(1402) in 16S rRNA + S-adenosyl-L-homocysteine + H(+). In terms of biological role, specifically methylates the N4 position of cytidine in position 1402 (C1402) of 16S rRNA. The polypeptide is Ribosomal RNA small subunit methyltransferase H (Escherichia coli O6:H1 (strain CFT073 / ATCC 700928 / UPEC)).